Here is a 226-residue protein sequence, read N- to C-terminus: Reticulon-like protein B16 (226 aa).

Residues 41 to 224 (AADLLLWRRR…RLSWSLSKDK (184 aa)) form the Reticulon domain. 3 consecutive transmembrane segments (helical) span residues 54-74 (LGVI…GLPF), 75-95 (LSVS…HARV), and 149-169 (VVIC…CTLL).

Its subcellular location is the endoplasmic reticulum membrane. The protein is Reticulon-like protein B16 (RTNLB16) of Arabidopsis thaliana (Mouse-ear cress).